The primary structure comprises 90 residues: uncharacterized protein (90 aa).

Transmembrane regions (helical) follow at residues 5–27, 40–62, and 67–89; these read FDIL…IIYI, IYLS…TFVA, and MSVV…YSIV.

It localises to the cell membrane. This is an uncharacterized protein from Archaeoglobus fulgidus (strain ATCC 49558 / DSM 4304 / JCM 9628 / NBRC 100126 / VC-16).